Reading from the N-terminus, the 625-residue chain is Protein SUPPRESSOR OF GENE SILENCING 3 (625 aa).

Disordered regions lie at residues Met1 to Pro20, Ala30 to His148, and Val161 to His195. Residues Lys54–Pro70 show a composition bias toward polar residues. The segment covering Gly80–Gly94 has biased composition (low complexity). Acidic residues predominate over residues Val161 to Ser188. Coiled coils occupy residues Lys452–Glu533 and Ile564–Met615.

It belongs to the SGS3 family. In terms of assembly, interacts with begomoviruses protein V2. Interacts with SGIP1 in cytoplasmic granules.

The protein localises to the cytoplasm. It localises to the perinuclear region. It is found in the cytoplasmic granule. Its function is as follows. Required for post-transcriptional gene silencing and natural virus resistance. May bind nucleic acids and is essential for the biogenesis of trans-acting siRNAs but is not required for silencing induced by IR-PTGS. Involved in the juvenile-to-adult transition regulation. In case of begomoviruses infection, it is targeted by the viral protein V2 leading to suppression of post-transcriptional gene silencing. Involved in the mechanisms necessary for quick response to heat and subsequent heritable transgenerational memory of heat acclimation (global warming) such as early flowering and attenuated immunity; this process includes epigenetic regulation as well as post-transcriptional gene silencing (PTGS). In response to heat, HSFA2 is activated and promotes the expression of REF6 which in turn derepresses HSFA2, thus establishing an inheritable feedback loop able to trigger SGIP1 and subsequent SGIP1-mediated SGS3 degradation; this prevents the biosynthesis of trans-acting siRNA (tasiRNA) and leads to the release of HTT5, which drives early flowering but attenuates immunity. In Arabidopsis thaliana (Mouse-ear cress), this protein is Protein SUPPRESSOR OF GENE SILENCING 3.